Consider the following 64-residue polypeptide: UPF0370 protein YPA_2246 (64 aa).

Residues tryptophan 3–isoleucine 23 form a helical membrane-spanning segment. Basic and acidic residues predominate over residues aspartate 36–asparagine 47. The tract at residues aspartate 36–lysine 64 is disordered.

Belongs to the UPF0370 family.

Its subcellular location is the cell membrane. The chain is UPF0370 protein YPA_2246 from Yersinia pestis bv. Antiqua (strain Antiqua).